The sequence spans 638 residues: DNA gyrase subunit B (638 aa).

A Toprim domain is found at 431 to 545 (RELFIVEGNS…YGFVYIAQPP (115 aa)). Positions 437, 510, and 512 each coordinate Mg(2+).

This sequence belongs to the type II topoisomerase GyrB family. Heterotetramer, composed of two GyrA and two GyrB chains. In the heterotetramer, GyrA contains the active site tyrosine that forms a transient covalent intermediate with DNA, while GyrB binds cofactors and catalyzes ATP hydrolysis. Mg(2+) serves as cofactor. It depends on Mn(2+) as a cofactor. Ca(2+) is required as a cofactor.

The protein localises to the cytoplasm. It carries out the reaction ATP-dependent breakage, passage and rejoining of double-stranded DNA.. Functionally, a type II topoisomerase that negatively supercoils closed circular double-stranded (ds) DNA in an ATP-dependent manner to modulate DNA topology and maintain chromosomes in an underwound state. Negative supercoiling favors strand separation, and DNA replication, transcription, recombination and repair, all of which involve strand separation. Also able to catalyze the interconversion of other topological isomers of dsDNA rings, including catenanes and knotted rings. Type II topoisomerases break and join 2 DNA strands simultaneously in an ATP-dependent manner. In Metamycoplasma arthritidis (Mycoplasma arthritidis), this protein is DNA gyrase subunit B.